Reading from the N-terminus, the 288-residue chain is ATP phosphoribosyltransferase (288 aa).

This sequence belongs to the ATP phosphoribosyltransferase family. Long subfamily. Mg(2+) serves as cofactor.

The protein resides in the cytoplasm. It carries out the reaction 1-(5-phospho-beta-D-ribosyl)-ATP + diphosphate = 5-phospho-alpha-D-ribose 1-diphosphate + ATP. Its pathway is amino-acid biosynthesis; L-histidine biosynthesis; L-histidine from 5-phospho-alpha-D-ribose 1-diphosphate: step 1/9. Its activity is regulated as follows. Feedback inhibited by histidine. In terms of biological role, catalyzes the condensation of ATP and 5-phosphoribose 1-diphosphate to form N'-(5'-phosphoribosyl)-ATP (PR-ATP). Has a crucial role in the pathway because the rate of histidine biosynthesis seems to be controlled primarily by regulation of HisG enzymatic activity. The polypeptide is ATP phosphoribosyltransferase (Methanococcus maripaludis (strain DSM 14266 / JCM 13030 / NBRC 101832 / S2 / LL)).